The chain runs to 171 residues: UPF0690 protein C1orf52 homolog A (171 aa).

Disordered stretches follow at residues 1–56 and 126–171; these read MAAE…GPDE and NVYQ…KRKV. The segment covering 47 to 56 has biased composition (basic and acidic residues); sequence EAKKLPGPDE. Positions 146-160 are enriched in acidic residues; the sequence is EEEAQEDSPPSDDEQ.

The protein belongs to the UPF0690 family.

The protein is UPF0690 protein C1orf52 homolog A of Xenopus laevis (African clawed frog).